The sequence spans 677 residues: WD and tetratricopeptide repeats protein 1 (677 aa).

WD repeat units lie at residues 45–84, 88–129, 132–172, 182–222, and 265–305; these read GHSG…KLLS, GHTA…TIHM, DHTN…KHSE, GQLV…NHRK, and RLRV…RPYT. Serine 353 carries the post-translational modification Phosphoserine. TPR repeat units follow at residues 362–395 and 397–432; these read LERV…APHN and MLYG…NPCH. Positions 487–509 are disordered; that stretch reads NDGEEKKGPGGGAPVRLRSTSRK. The residue at position 511 (serine 511) is a Phosphoserine. WD repeat units follow at residues 535 to 575 and 578 to 617; these read NTTT…LVRV and GDES…EDLT. The segment at 655–677 is disordered; it reads SSGGAGASDDEDSSEGQVQCRPS.

It functions in the pathway protein modification; protein ubiquitination. In terms of biological role, may function as a substrate receptor for CUL4-DDB1 E3 ubiquitin-protein ligase complex. The protein is WD and tetratricopeptide repeats protein 1 (WDTC1) of Homo sapiens (Human).